We begin with the raw amino-acid sequence, 562 residues long: Dihydroxy-acid dehydratase (562 aa).

Aspartate 80 serves as a coordination point for Mg(2+). [2Fe-2S] cluster is bound at residue cysteine 121. The Mg(2+) site is built by aspartate 122 and lysine 123. Lysine 123 carries the N6-carboxylysine modification. Position 194 (cysteine 194) interacts with [2Fe-2S] cluster. A Mg(2+)-binding site is contributed by glutamate 446. The Proton acceptor role is filled by serine 472.

It belongs to the IlvD/Edd family. As to quaternary structure, homodimer. It depends on [2Fe-2S] cluster as a cofactor. Mg(2+) is required as a cofactor.

The enzyme catalyses (2R)-2,3-dihydroxy-3-methylbutanoate = 3-methyl-2-oxobutanoate + H2O. The catalysed reaction is (2R,3R)-2,3-dihydroxy-3-methylpentanoate = (S)-3-methyl-2-oxopentanoate + H2O. The protein operates within amino-acid biosynthesis; L-isoleucine biosynthesis; L-isoleucine from 2-oxobutanoate: step 3/4. Its pathway is amino-acid biosynthesis; L-valine biosynthesis; L-valine from pyruvate: step 3/4. In terms of biological role, functions in the biosynthesis of branched-chain amino acids. Catalyzes the dehydration of (2R,3R)-2,3-dihydroxy-3-methylpentanoate (2,3-dihydroxy-3-methylvalerate) into 2-oxo-3-methylpentanoate (2-oxo-3-methylvalerate) and of (2R)-2,3-dihydroxy-3-methylbutanoate (2,3-dihydroxyisovalerate) into 2-oxo-3-methylbutanoate (2-oxoisovalerate), the penultimate precursor to L-isoleucine and L-valine, respectively. The protein is Dihydroxy-acid dehydratase of Staphylococcus aureus (strain Mu50 / ATCC 700699).